We begin with the raw amino-acid sequence, 233 residues long: Mediator of RNA polymerase II transcription subunit 7 (233 aa).

A Glycyl lysine isopeptide (Lys-Gly) (interchain with G-Cter in SUMO1); alternate cross-link involves residue Lys185. A Glycyl lysine isopeptide (Lys-Gly) (interchain with G-Cter in SUMO2); alternate cross-link involves residue Lys185. Residues 187–213 (EPMDADDSNNCTGQNEHQRENSGHRRD) form a disordered region. Residue Ser194 is modified to Phosphoserine. Residues 202 to 213 (EHQRENSGHRRD) are compositionally biased toward basic and acidic residues.

It belongs to the Mediator complex subunit 7 family. Component of the Mediator complex, which is composed of MED1, MED4, MED6, MED7, MED8, MED9, MED10, MED11, MED12, MED13, MED13L, MED14, MED15, MED16, MED17, MED18, MED19, MED20, MED21, MED22, MED23, MED24, MED25, MED26, MED27, MED29, MED30, MED31, CCNC, CDK8 and CDC2L6/CDK11. The MED12, MED13, CCNC and CDK8 subunits form a distinct module termed the CDK8 module. Mediator containing the CDK8 module is less active than Mediator lacking this module in supporting transcriptional activation. Individual preparations of the Mediator complex lacking one or more distinct subunits have been variously termed ARC, CRSP, DRIP, PC2, SMCC and TRAP. In terms of processing, constitutively sumoylated.

It localises to the nucleus. Functionally, component of the Mediator complex, a coactivator involved in the regulated transcription of nearly all RNA polymerase II-dependent genes. Mediator functions as a bridge to convey information from gene-specific regulatory proteins to the basal RNA polymerase II transcription machinery. Mediator is recruited to promoters by direct interactions with regulatory proteins and serves as a scaffold for the assembly of a functional preinitiation complex with RNA polymerase II and the general transcription factors. This Homo sapiens (Human) protein is Mediator of RNA polymerase II transcription subunit 7 (MED7).